A 60-amino-acid polypeptide reads, in one-letter code: Cytotoxin 1 (60 aa).

4 disulfides stabilise this stretch: cysteine 3–cysteine 21, cysteine 14–cysteine 38, cysteine 42–cysteine 53, and cysteine 54–cysteine 59.

Belongs to the three-finger toxin family. Short-chain subfamily. Type IA cytotoxin sub-subfamily. As to quaternary structure, monomer in solution; Homodimer and oligomer in the presence of negatively charged lipids forming a pore with a size ranging between 20 and 30 Angstroms. As to expression, expressed by the venom gland.

It localises to the secreted. The protein localises to the target cell membrane. Its function is as follows. Produces complete blockade of auricular contraction, which is irreversible at high concentrations. Induces apoptosis in leukemic cells. Possesses anti-arthritic and anti-inflammatory potential. The chain is Cytotoxin 1 from Naja kaouthia (Monocled cobra).